Reading from the N-terminus, the 192-residue chain is Ion-translocating oxidoreductase complex subunit B (192 aa).

The interval 1–26 (MNAIWIAVVAVSLLGLAFGAILGYAS) is hydrophobic. Positions 32–91 (EDDPVVEKIDEILPQSQCGQCGYPGCRPYAEAIGSQGEKINRCAPGGEAVMLKIATLLNV) constitute a 4Fe-4S domain. 12 residues coordinate [4Fe-4S] cluster: Cys-49, Cys-52, Cys-57, Cys-74, Cys-117, Cys-120, Cys-123, Cys-127, Cys-147, Cys-150, Cys-153, and Cys-157. 2 consecutive 4Fe-4S ferredoxin-type domains span residues 108 to 137 (MLAV…GATR) and 138 to 167 (AMHT…LRPV).

It belongs to the 4Fe4S bacterial-type ferredoxin family. RnfB subfamily. In terms of assembly, the complex is composed of six subunits: RnfA, RnfB, RnfC, RnfD, RnfE and RnfG. [4Fe-4S] cluster is required as a cofactor.

The protein localises to the cell inner membrane. Part of a membrane-bound complex that couples electron transfer with translocation of ions across the membrane. The polypeptide is Ion-translocating oxidoreductase complex subunit B (Citrobacter koseri (strain ATCC BAA-895 / CDC 4225-83 / SGSC4696)).